We begin with the raw amino-acid sequence, 682 residues long: Cyclic nucleotide-gated cation channel (682 aa).

Positions 1-41 (MTGQAALERSVSSHRLSVRSRLEGEAERAESAISRTDGDDD) are disordered. The Cytoplasmic segment spans residues 1–136 (MTGQAALERS…EGFVVSQSDD (136 aa)). Over residues 20–30 (SRLEGEAERAE) the composition is skewed to basic and acidic residues. The helical transmembrane segment at 137-157 (IYYYWLFFIALASLYNWIMLV) threads the bilayer. Topologically, residues 158 to 169 (ARACFDQLQDEN) are extracellular. A helical membrane pass occupies residues 170–190 (FFLWVGLDYLCDVIYILDTCI). Residues 191 to 218 (RLRTGYLEQGLLVKDLAKLRDNYIRTLQ) are Cytoplasmic-facing. Residues 219–239 (FKLDFLSILPTELLFFVTGYV) traverse the membrane as a helical segment. Residues 240 to 272 (PQLRFNRLLRFSRMFEFFDRTETRTNYPNAFRI) lie on the Extracellular side of the membrane. The helical transmembrane segment at 273-293 (CNLILYILVIIHWNACIYYAI) threads the bilayer. The Cytoplasmic segment spans residues 294 to 311 (SKALGLSSDTWVYSGQNK). A helical membrane pass occupies residues 312–332 (TLSFCYVYCFYWSTLTLTTIG). The Extracellular portion of the chain corresponds to 333–343 (EMPPPVKDEEY). A helical transmembrane segment spans residues 344-364 (VFVVFDFLVGVLIFATIVGNV). The Cytoplasmic segment spans residues 365 to 682 (GSMIANMNAT…SAETNSEEET (318 aa)). 3',5'-cyclic AMP is bound by residues 455–577 (LLVE…QGLL), Glu-514, and Arg-529. A disordered region spans residues 649–682 (GEHAGVPTHTHADIHAQPETHTRTSAETNSEEET). Over residues 658–672 (THADIHAQPETHTRT) the composition is skewed to basic and acidic residues.

The protein belongs to the cyclic nucleotide-gated cation channel (TC 1.A.1.5) family. As to expression, olfactory neurons.

It localises to the membrane. Functionally, this cyclic nucleotide-gated channel is activated equally well by both cAMP and cGMP. The polypeptide is Cyclic nucleotide-gated cation channel (Ictalurus punctatus (Channel catfish)).